The chain runs to 61 residues: uncharacterized protein (61 aa).

A coiled-coil region spans residues 34–61 (TDVEDIDRLISMLDDLEAKYERFKKDWE).

This is an uncharacterized protein from Bacillus subtilis (strain 168).